A 454-amino-acid polypeptide reads, in one-letter code: Death-associated protein kinase 3 (454 aa).

A Protein kinase domain is found at 13 to 275 (YEMGEELGSG…IAQSLEHSWI (263 aa)). Residues 19–27 (LGSGQFAIV) and Lys-42 contribute to the ATP site. Residue Ser-50 is modified to Phosphoserine; by autocatalysis. Pyridone 6 is bound by residues Glu-94 and Val-96. Catalysis depends on Asp-139, which acts as the Proton acceptor. Positions 161 to 204 (DFGIAHKIEAGNEFKNIFGTPEFVAPEIVNYEPLGLEADMWSIG) are activation segment. Phosphothreonine is present on residues Thr-180 and Thr-225. Residue Thr-265 is modified to Phosphothreonine; by autocatalysis and ROCK1. Thr-299 is modified (phosphothreonine; by autocatalysis, DAPK1 and ROCK1). Thr-306 carries the post-translational modification Phosphothreonine; by autocatalysis. Ser-309 bears the Phosphoserine; by DAPK1 mark. Position 311 is a phosphoserine; by autocatalysis and DAPK1 (Ser-311). Phosphoserine; by DAPK1 occurs at positions 312, 318, and 326. Residues 427 to 441 (VASEMRFVQDLVRAL) form a leucine-zipper region.

Belongs to the protein kinase superfamily. CAMK Ser/Thr protein kinase family. DAP kinase subfamily. As to quaternary structure, homooligomer in its kinase-active form (homotrimers and homodimers are reported); monomeric in its kinase-inactive form. Homodimerization is required for activation segment autophosphorylation. Isoform 1 and isoform 2 interact with myosin and PPP1R12A; interaction of isoform 1 with PPP1R12A is inhibited by RhoA dominant negative form. Interacts with NLK, DAXX, STAT3, RHOD (GTP-bound form) and TCP10L. Interacts with PAWR; the interaction is reported conflictingly: according to PubMed:17953487 does not interact with PAWR. Interacts with ULK1; may be a substrate of ULK1. Interacts with LUZP1; the interaction is likely to occur throughout the cell cycle and reduces the LUZP1-mediated suppression of MYL9 phosphorylation. Mg(2+) is required as a cofactor. The phosphorylation status is critical for kinase activity, oligomerization and intracellular localization. Phosphorylation at Thr-180, Thr-225 and Thr-265 is essential for activity. The phosphorylated form is localized in the cytoplasm promoted by phosphorylation at Thr-299; nuclear translocation or retention is maximal when it is not phosphorylated. Phosphorylation increases the trimeric form, and its dephosphorylation favors a kinase-inactive monomeric form. Both isoform 1 and isoform 2 can undergo autophosphorylation. In terms of tissue distribution, widely expressed. Isoform 1 and isoform 2 are expressed in the bladder smooth muscle.

The protein localises to the nucleus. It is found in the PML body. The protein resides in the cytoplasm. It localises to the cytoskeleton. Its subcellular location is the microtubule organizing center. The protein localises to the centrosome. It is found in the chromosome. The protein resides in the centromere. It localises to the spindle. Its subcellular location is the midbody. It carries out the reaction L-seryl-[protein] + ATP = O-phospho-L-seryl-[protein] + ADP + H(+). It catalyses the reaction L-threonyl-[protein] + ATP = O-phospho-L-threonyl-[protein] + ADP + H(+). A sequential activation is proposed: autophosphorylation at consensus sites is leading to dimerization of the catalytic domain stabilized by phosphorylation at Ser-50 and activation segment exchange (producing an active confirmation of both kinase modules in trans) followed by phosphorylation at Thr-180 in the activation segment and at other regulatory sites. Phosphorylation at Thr-180, Thr-225 and Thr-265 is essential for activity. Oligomerization is required for full enzymatic activity. Inhibited by pyridone-6 (K00225), a potent, ATP-competitive inhibitor. In terms of biological role, serine/threonine kinase which is involved in the regulation of apoptosis, autophagy, transcription, translation and actin cytoskeleton reorganization. Involved in the regulation of smooth muscle contraction. Regulates both type I (caspase-dependent) apoptotic and type II (caspase-independent) autophagic cell deaths signal, depending on the cellular setting. Involved in regulation of starvation-induced autophagy. Regulates myosin phosphorylation in both smooth muscle and non-muscle cells. In smooth muscle, regulates myosin either directly by phosphorylating MYL12B and MYL9 or through inhibition of smooth muscle myosin phosphatase (SMPP1M) via phosphorylation of PPP1R12A; the inhibition of SMPP1M functions to enhance muscle responsiveness to Ca(2+) and promote a contractile state. Phosphorylates MYL12B in non-muscle cells leading to reorganization of actin cytoskeleton. Isoform 2 can phosphorylate myosin, PPP1R12A and MYL12B. Overexpression leads to condensation of actin stress fibers into thick bundles. Involved in actin filament focal adhesion dynamics. The function in both reorganization of actin cytoskeleton and focal adhesion dissolution is modulated by RhoD. Positively regulates canonical Wnt/beta-catenin signaling through interaction with NLK and TCF7L2. Phosphorylates RPL13A on 'Ser-77' upon interferon-gamma activation which is causing RPL13A release from the ribosome, RPL13A association with the GAIT complex and its subsequent involvement in transcript-selective translation inhibition. Enhances transcription from AR-responsive promoters in a hormone- and kinase-dependent manner. Involved in regulation of cell cycle progression and cell proliferation. May be a tumor suppressor. This chain is Death-associated protein kinase 3 (DAPK3), found in Homo sapiens (Human).